The primary structure comprises 270 residues: Putative carboxymethylenebutenolidase (270 aa).

Residues cysteine 147, aspartate 204, and histidine 236 contribute to the active site.

Belongs to the dienelactone hydrolase family.

It carries out the reaction 2-(5-oxo-2,5-dihydrofuran-2-ylidene)acetate + H2O = 4-oxohex-2-enedioate + H(+). The chain is Putative carboxymethylenebutenolidase (ysgA) from Salmonella typhimurium (strain LT2 / SGSC1412 / ATCC 700720).